Consider the following 1104-residue polypeptide: Carbamoyl phosphate synthase large chain (1104 aa).

A carboxyphosphate synthetic domain region spans residues 1-402; sequence MPRRTDLKSV…ALQKALRSTE (402 aa). Residues Arg-129, Arg-169, Gly-175, Gly-176, Glu-208, Ile-210, Glu-215, Gly-241, Val-242, His-243, Gln-285, and Glu-299 each coordinate ATP. Residues 133-328 enclose the ATP-grasp 1 domain; that stretch reads KGVVERCGAE…IAKIAARLAV (196 aa). Mg(2+)-binding residues include Gln-285, Glu-299, and Asn-301. Residues Gln-285, Glu-299, and Asn-301 each contribute to the Mn(2+) site. Positions 403–547 are oligomerization domain; it reads KRGATFSWAG…YSSYDEEDET (145 aa). Residues 548–948 are carbamoyl phosphate synthetic domain; the sequence is RPREKAAIVI…AFGKSQTAAY (401 aa). The 192-residue stretch at 676–867 folds into the ATP-grasp 2 domain; the sequence is GQVLERAGLV…LAKAAARLMA (192 aa). ATP-binding residues include Arg-712, Arg-751, Leu-753, Glu-758, Gly-783, Ile-784, His-785, Ser-786, Gln-826, and Glu-838. Positions 826, 838, and 840 each coordinate Mg(2+). Gln-826, Glu-838, and Asn-840 together coordinate Mn(2+). The MGS-like domain maps to 949–1099; the sequence is GGLPTAGTAF…QEHTARLNAA (151 aa). The segment at 949–1104 is allosteric domain; sequence GGLPTAGTAF…RLNAAWEGRA (156 aa).

The protein belongs to the CarB family. As to quaternary structure, composed of two chains; the small (or glutamine) chain promotes the hydrolysis of glutamine to ammonia, which is used by the large (or ammonia) chain to synthesize carbamoyl phosphate. Tetramer of heterodimers (alpha,beta)4. Requires Mg(2+) as cofactor. Mn(2+) is required as a cofactor.

It carries out the reaction hydrogencarbonate + L-glutamine + 2 ATP + H2O = carbamoyl phosphate + L-glutamate + 2 ADP + phosphate + 2 H(+). It catalyses the reaction hydrogencarbonate + NH4(+) + 2 ATP = carbamoyl phosphate + 2 ADP + phosphate + 2 H(+). The protein operates within amino-acid biosynthesis; L-arginine biosynthesis; carbamoyl phosphate from bicarbonate: step 1/1. It participates in pyrimidine metabolism; UMP biosynthesis via de novo pathway; (S)-dihydroorotate from bicarbonate: step 1/3. In terms of biological role, large subunit of the glutamine-dependent carbamoyl phosphate synthetase (CPSase). CPSase catalyzes the formation of carbamoyl phosphate from the ammonia moiety of glutamine, carbonate, and phosphate donated by ATP, constituting the first step of 2 biosynthetic pathways, one leading to arginine and/or urea and the other to pyrimidine nucleotides. The large subunit (synthetase) binds the substrates ammonia (free or transferred from glutamine from the small subunit), hydrogencarbonate and ATP and carries out an ATP-coupled ligase reaction, activating hydrogencarbonate by forming carboxy phosphate which reacts with ammonia to form carbamoyl phosphate. In Kineococcus radiotolerans (strain ATCC BAA-149 / DSM 14245 / SRS30216), this protein is Carbamoyl phosphate synthase large chain.